A 248-amino-acid chain; its full sequence is Adenylate kinase isoenzyme 6 homolog HBR1 (248 aa).

The ATP site is built by Gly-19, Gly-21, Lys-22, Ser-23, and Ser-24. Residues 49 to 72 (NISEIAKERDCIESYDAKLDTSIV) are NMPbind. Residues 124–134 (TRNYNDLKLQE) form an LID region. Arg-125 contributes to the ATP binding site. The disordered stretch occupies residues 188-248 (DGVSNELNKQ…EMEHTEDIAQ (61 aa)). Residues 202–238 (DSSDEGDDNSDSDEYELEEDEQEEEEEREEYDEETNE) show a composition bias toward acidic residues. Residues 239–248 (EMEHTEDIAQ) show a composition bias toward basic and acidic residues.

The protein belongs to the adenylate kinase family. AK6 subfamily. Interacts with small ribosomal subunit protein uS11. Not a structural component of 43S pre-ribosomes, but transiently interacts with them by binding to uS11.

It is found in the cytoplasm. Its subcellular location is the nucleus. It catalyses the reaction AMP + ATP = 2 ADP. It carries out the reaction ATP + H2O = ADP + phosphate + H(+). Functionally, broad-specificity nucleoside monophosphate (NMP) kinase that catalyzes the reversible transfer of the terminal phosphate group between nucleoside triphosphates and monophosphates. Also has ATPase activity. Involved in the late cytoplasmic maturation steps of the 40S ribosomal particles, specifically 18S rRNA maturation. While NMP activity is not required for ribosome maturation, ATPase activity is. Associates transiently with small ribosomal subunit protein uS11. ATP hydrolysis breaks the interaction with uS11. May temporarily remove uS11 from the ribosome to enable a conformational change of the ribosomal RNA that is needed for the final maturation step of the small ribosomal subunit. Its NMP activity may have a role in nuclear energy homeostasis. Induces transcription of mating-type proteins ALPHA1 and ALPHA2 and moderately represses transcription of mating-type protein A1 in response to hemoglobin and growth signals. Involved in the induction of a high affinity fibronectin receptor by sub-inhibitory dosages of caspofungin. The protein is Adenylate kinase isoenzyme 6 homolog HBR1 (HBR1) of Candida albicans (strain SC5314 / ATCC MYA-2876) (Yeast).